The primary structure comprises 286 residues: Alpha-ketoglutarate-dependent dioxygenase alkB homolog 3 (286 aa).

Residues 1–38 are disordered; the sequence is MEDKRRRARVQGAWAGPAKSQATAQPAPTAENNLQQRP. The segment covering 20–36 has biased composition (polar residues); that stretch reads SQATAQPAPTAENNLQQ. Residues Trp115 and 141–143 each bind substrate; that span reads YTY. The region spanning 172–278 is the Fe2OG dioxygenase domain; the sequence is SFNSLLCNLY…RINLTFRTVY (107 aa). Leu177 carries the post-translational modification (4R)-5-hydroxyleucine; alternate. The residue at position 177 (Leu177) is a (4R)-5-oxoleucine; alternate. 179–181 is a 2-oxoglutarate binding site; that stretch reads NLY. The Fe cation site is built by His191 and Asp193. Position 194 (Asp194) interacts with substrate. His257 provides a ligand contact to Fe cation. Residues 269 to 275 and Arg275 contribute to the 2-oxoglutarate site; that span reads RINLTFR.

This sequence belongs to the alkB family. In terms of assembly, interacts with the ASCC complex composed of ASCC1, ASCC2 and ASCC3. Interacts directly with ASCC3, and is thereby recruited to the ASCC complex. Interacts with OTUD4; the interaction is direct. Interacts with USP7 and USP9X. Fe(2+) serves as cofactor. Ubiquitinated; undergoes 'Lys-48'-linked polyubiquitination. OTUD4 promotes USP7 and USP9X-dependent deubiquitination of 'Lys-48'-polyubiquitinated ALKBH3 promoting the repair of alkylated DNA lesions.

The protein localises to the nucleus. The protein resides in the cytoplasm. The enzyme catalyses an N(1)-methyladenosine in mRNA + 2-oxoglutarate + O2 = an adenosine in mRNA + formaldehyde + succinate + CO2. The catalysed reaction is a methylated nucleobase within DNA + 2-oxoglutarate + O2 = a nucleobase within DNA + formaldehyde + succinate + CO2. It catalyses the reaction an N(1)-methyl-2'-deoxyadenosine in single-stranded DNA + 2-oxoglutarate + O2 = a 2'-deoxyadenosine in single-stranded DNA + formaldehyde + succinate + CO2 + H(+). It carries out the reaction an N(3)-methyl-2'-deoxycytidine in single-stranded DNA + 2-oxoglutarate + O2 = a 2'-deoxycytidine in single-stranded DNA + formaldehyde + succinate + CO2 + H(+). The enzyme catalyses a 3,N(4)-etheno-2'-deoxycytidine in single-stranded DNA + 2-oxoglutarate + O2 + H2O = a 2'-deoxycytidine in single-stranded DNA + glyoxal + succinate + CO2. Activated by ascorbate. Its function is as follows. Dioxygenase that mediates demethylation of DNA and RNA containing 1-methyladenosine (m1A). Repairs alkylated DNA containing 1-methyladenosine (m1A) and 3-methylcytosine (m3C) by oxidative demethylation. Has a strong preference for single-stranded DNA. Able to process alkylated m3C within double-stranded regions via its interaction with ASCC3, which promotes DNA unwinding to generate single-stranded substrate needed for ALKBH3. Can repair exocyclic 3,N4-ethenocytosine adducs in single-stranded DNA. Also acts on RNA. Demethylates N(1)-methyladenosine (m1A) RNA, an epigenetic internal modification of messenger RNAs (mRNAs) highly enriched within 5'-untranslated regions (UTRs) and in the vicinity of start codons. Requires molecular oxygen, alpha-ketoglutarate and iron. The protein is Alpha-ketoglutarate-dependent dioxygenase alkB homolog 3 of Bos taurus (Bovine).